Reading from the N-terminus, the 181-residue chain is GTP cyclohydrolase 1 2 (181 aa).

Belongs to the GTP cyclohydrolase I family. As to quaternary structure, homomer.

It carries out the reaction GTP + H2O = 7,8-dihydroneopterin 3'-triphosphate + formate + H(+). It functions in the pathway cofactor biosynthesis; 7,8-dihydroneopterin triphosphate biosynthesis; 7,8-dihydroneopterin triphosphate from GTP: step 1/1. In Pseudomonas syringae pv. tomato (strain ATCC BAA-871 / DC3000), this protein is GTP cyclohydrolase 1 2.